A 122-amino-acid chain; its full sequence is Biogenesis of lysosome-related organelles complex 1 subunit BLS1 (122 aa).

Ser33 carries the phosphoserine modification.

It belongs to the BLOC1S1 family. As to quaternary structure, component of the biogenesis of lysosome-related organelles complex-1 (BLOC-1) composed of at least BLI1, BLS1, CNL1, KXD1, SNN1 and VAB2.

It is found in the endosome. In terms of biological role, component of the biogenesis of lysosome-related organelles complex-1 (BLOC-1), a complex involved in endosomal cargo sorting. This is Biogenesis of lysosome-related organelles complex 1 subunit BLS1 (BLS1) from Saccharomyces cerevisiae (strain RM11-1a) (Baker's yeast).